We begin with the raw amino-acid sequence, 128 residues long: Lymphocyte antigen 6D (128 aa).

Residues 1–20 (MRTALLLLAALAVATGPALT) form the signal peptide. A UPAR/Ly6 domain is found at 21–108 (LRCHVCTSSS…AAPTRTALAH (88 aa)). Intrachain disulfides connect Cys23–Cys45, Cys26–Cys32, Cys38–Cys63, Cys67–Cys86, and Cys87–Cys92. A lipid anchor (GPI-anchor amidated asparagine) is attached at Asn98. A propeptide spans 99 to 128 (AAPTRTALAHSALSLGLALSLLAVILAPSL) (removed in mature form).

Expressed exclusively at the outer cell surface of transitional epithelia and the keratinocyte of stratified squamous epithelia.

Its subcellular location is the cell membrane. May act as a specification marker at earliest stage specification of lymphocytes between B- and T-cell development. Marks the earliest stage of B-cell specification. The chain is Lymphocyte antigen 6D (LY6D) from Homo sapiens (Human).